Reading from the N-terminus, the 1463-residue chain is DNA polymerase III PolC-type (1463 aa).

Residues 425–581 (YVVFDVETTG…YDAEATGRLL (157 aa)) enclose the Exonuclease domain.

This sequence belongs to the DNA polymerase type-C family. PolC subfamily.

The protein localises to the cytoplasm. It carries out the reaction DNA(n) + a 2'-deoxyribonucleoside 5'-triphosphate = DNA(n+1) + diphosphate. Required for replicative DNA synthesis. This DNA polymerase also exhibits 3' to 5' exonuclease activity. This Streptococcus pneumoniae serotype 2 (strain D39 / NCTC 7466) protein is DNA polymerase III PolC-type.